A 144-amino-acid polypeptide reads, in one-letter code: Augurin-B (144 aa).

A signal peptide spans 1–18; the sequence is MSLHSLCVPTILLISVLS. A propeptide spanning residues 19-68 is cleaved from the precursor; the sequence is ICLSSGGSSDSKLHRILIKRDAKEIESRPKAYISVQQSKAKEFLSGLHRT. The tract at residues 109 to 144 is disordered; that stretch reads RSNDQGRQHHHDENAPMSQQDPRYNRHGANVNYDYY. Over residues 112–122 the composition is skewed to basic and acidic residues; it reads DQGRQHHHDEN.

The protein belongs to the augurin family.

It is found in the secreted. The protein resides in the cytoplasm. It localises to the apical cell membrane. Probable hormone. Required for the proper formation of the central nervous system by attenuating cell proliferation during development. This chain is Augurin-B, found in Danio rerio (Zebrafish).